A 1016-amino-acid polypeptide reads, in one-letter code: Rho family-interacting cell polarization regulator 2 (1016 aa).

Phosphoserine is present on residues Ser21 and Ser37. A disordered region spans residues 44 to 73 (AVKKPQAKLKKMHNLGHKNSSPPKEPQPKR). Over residues 48 to 59 (PQAKLKKMHNLG) the composition is skewed to basic residues. The segment at 55–113 (MHNLGHKNSSPPKEPQPKRVEEVYRALKNGLDEYLEVHQTELDKLTTQLKDMRRNSRLG) is involved in cell filopodia formation. Positions 85-112 (LDEYLEVHQTELDKLTTQLKDMRRNSRL) form a coiled coil. Ser341 is modified (phosphoserine). Residues 414-428 (TSTELPPGSQSSQNE) are compositionally biased toward polar residues. The tract at residues 414 to 469 (TSTELPPGSQSSQNEGLKDSSSASCSSSSREGSEPRPHPEGETQGLGKPEGCPVAT) is disordered. The span at 433–442 (SSSASCSSSS) shows a compositional bias: low complexity. Positions 444-454 (EGSEPRPHPEG) are enriched in basic and acidic residues. Ser520 and Ser532 each carry phosphoserine. Residues 636–656 (DSVFSDTETEKNSYRSVHPEA) form a disordered region. Over residues 643–656 (ETEKNSYRSVHPEA) the composition is skewed to basic and acidic residues.

The protein belongs to the RIPOR family. Homooligomer; homooligomerization is regulated by RHOC and leads to the formation of concatemers through the association of N- and C-termini. Interacts (phosphorylated form) with 14-3-3 proteins; these interactions occur during myogenic cell differentiation and also induces T cell proliferation arrest. Interacts (phosphorylated form) with HDAC6; this interaction occurs during early myogenic differentiation, prevents HDAC6 to deacetylate tubulin and also induces T cell proliferation arrest. Interacts with DYSF; this interaction occurs during early myogenic differentiation. Interacts with MYOF. Interacts (via active GTP- or inactive GDP-bound forms) with RHOA; this interaction is direct, blocks the loading of GTP to RHOA and decreases upon chemokine CCL19 stimulation in primary T lymphocytes. Interacts with RHOC. Interacts (via phosphorylated form) with YWHAB; this interaction occurs in a chemokine-dependent manner and does not compete for binding of RIPOR2 with RHOA nor blocks inhibition of RIPOR2-mediated RHOA activity. Interacts with YWHAE. Interacts with YWHAQ. Post-translationally, phosphorylated. Chemokine-induced phosphorylation in neutrophils occurs in a PKC- and AKT-dependent manner, resulting in RIPOR2 interaction with YWHAB and stabilization. Phosphorylated by PKCA, AKT1 and MAPKAPK1A; in vitro.

The protein localises to the cytoplasm. It localises to the cytoskeleton. It is found in the cell projection. The protein resides in the filopodium. Its subcellular location is the apical cell membrane. The protein localises to the stereocilium. It localises to the stereocilium membrane. In terms of biological role, acts as an inhibitor of the small GTPase RHOA and plays several roles in the regulation of myoblast and hair cell differentiation, lymphocyte T proliferation and neutrophil polarization. Plays a role in fetal mononuclear myoblast differentiation by promoting filopodia and myotube formation. Maintains naive T lymphocytes in a quiescent state and prevents chemokine-induced T lymphocyte responses, such as cell adhesion, polarization and migration. Involved also in the regulation of neutrophil polarization, chemotaxis and adhesion. Required for normal development of inner and outer hair cell stereocilia within the cochlea of the inner ear. Plays a role for maintaining the structural organization of the basal domain of stereocilia. Involved in mechanosensory hair cell function. Required for normal hearing. The sequence is that of Rho family-interacting cell polarization regulator 2 from Bos taurus (Bovine).